Consider the following 291-residue polypeptide: ATP phosphoribosyltransferase (291 aa).

Belongs to the ATP phosphoribosyltransferase family. Long subfamily. It depends on Mg(2+) as a cofactor.

It localises to the cytoplasm. The catalysed reaction is 1-(5-phospho-beta-D-ribosyl)-ATP + diphosphate = 5-phospho-alpha-D-ribose 1-diphosphate + ATP. Its pathway is amino-acid biosynthesis; L-histidine biosynthesis; L-histidine from 5-phospho-alpha-D-ribose 1-diphosphate: step 1/9. With respect to regulation, feedback inhibited by histidine. Functionally, catalyzes the condensation of ATP and 5-phosphoribose 1-diphosphate to form N'-(5'-phosphoribosyl)-ATP (PR-ATP). Has a crucial role in the pathway because the rate of histidine biosynthesis seems to be controlled primarily by regulation of HisG enzymatic activity. This is ATP phosphoribosyltransferase from Geotalea uraniireducens (strain Rf4) (Geobacter uraniireducens).